A 198-amino-acid polypeptide reads, in one-letter code: 3-isopropylmalate dehydratase small subunit (198 aa).

This sequence belongs to the LeuD family. LeuD type 1 subfamily. Heterodimer of LeuC and LeuD.

It catalyses the reaction (2R,3S)-3-isopropylmalate = (2S)-2-isopropylmalate. The protein operates within amino-acid biosynthesis; L-leucine biosynthesis; L-leucine from 3-methyl-2-oxobutanoate: step 2/4. Its function is as follows. Catalyzes the isomerization between 2-isopropylmalate and 3-isopropylmalate, via the formation of 2-isopropylmaleate. This Mycolicibacterium paratuberculosis (strain ATCC BAA-968 / K-10) (Mycobacterium paratuberculosis) protein is 3-isopropylmalate dehydratase small subunit.